A 403-amino-acid polypeptide reads, in one-letter code: Acetylornithine aminotransferase (403 aa).

Pyridoxal 5'-phosphate contacts are provided by residues 107-108 (GA) and Phe140. Arg143 provides a ligand contact to N(2)-acetyl-L-ornithine. 225 to 228 (DEVQ) is a binding site for pyridoxal 5'-phosphate. Lys254 carries the N6-(pyridoxal phosphate)lysine modification. Residue Ser282 coordinates N(2)-acetyl-L-ornithine. Thr283 lines the pyridoxal 5'-phosphate pocket.

This sequence belongs to the class-III pyridoxal-phosphate-dependent aminotransferase family. ArgD subfamily. Homodimer. Pyridoxal 5'-phosphate serves as cofactor.

It is found in the cytoplasm. The enzyme catalyses N(2)-acetyl-L-ornithine + 2-oxoglutarate = N-acetyl-L-glutamate 5-semialdehyde + L-glutamate. The protein operates within amino-acid biosynthesis; L-arginine biosynthesis; N(2)-acetyl-L-ornithine from L-glutamate: step 4/4. The chain is Acetylornithine aminotransferase from Vibrio parahaemolyticus serotype O3:K6 (strain RIMD 2210633).